The primary structure comprises 304 residues: MYTFKRYLTKTKDTLIRQFKAANAKKLIKIKYPILAVMGFFVLLIVFVLRDYFLKLGIGHSTSTGFITINVITNSGVGFSLFNQNPAVPYLLQSLLTIIFLITFIFSKNKALIVLLPLITFGGLANVIDRSVPVTLSNGTVETNSVLDYFQFFRSSAIFNFADICIVTGFALIFLTFVVDIFLDLKKKNKKTVSTTNKQLHGWKSIPLEERSKWNDWADHKCVFCNQQMMINSNEVICSNEECAYIDLINIAKPISVEKQENCLICNSEMIKKVDDKQASFLACSRFNEKCYYTKSCKQIENNA.

3 consecutive transmembrane segments (helical) span residues 28–48 (IKIKYPILAVMGFFVLLIVFV), 86–106 (PAVPYLLQSLLTIIFLITFIF), and 112–132 (LIVLLPLITFGGLANVIDRSV). Catalysis depends on residues aspartate 148 and aspartate 163. A helical membrane pass occupies residues 163-183 (DICIVTGFALIFLTFVVDIFL).

The protein belongs to the peptidase A8 family.

It localises to the cell membrane. The enzyme catalyses Release of signal peptides from bacterial membrane prolipoproteins. Hydrolyzes -Xaa-Yaa-Zaa-|-(S,diacylglyceryl)Cys-, in which Xaa is hydrophobic (preferably Leu), and Yaa (Ala or Ser) and Zaa (Gly or Ala) have small, neutral side chains.. The protein operates within protein modification; lipoprotein biosynthesis (signal peptide cleavage). Its function is as follows. This protein specifically catalyzes the removal of signal peptides from prolipoproteins. In Mycoplasmoides gallisepticum (strain R(low / passage 15 / clone 2)) (Mycoplasma gallisepticum), this protein is Lipoprotein signal peptidase.